Reading from the N-terminus, the 362-residue chain is Methionine import ATP-binding protein MetN (362 aa).

One can recognise an ABC transporter domain in the interval 2 to 241 (IHIENLSKTY…PRHEVTRAMV (240 aa)). 38-45 (GPSGAGKS) is a binding site for ATP.

The protein belongs to the ABC transporter superfamily. Methionine importer (TC 3.A.1.24) family. In terms of assembly, the complex is composed of two ATP-binding proteins (MetN), two transmembrane proteins (MetI) and a solute-binding protein (MetQ).

The protein localises to the cell inner membrane. The catalysed reaction is L-methionine(out) + ATP + H2O = L-methionine(in) + ADP + phosphate + H(+). The enzyme catalyses D-methionine(out) + ATP + H2O = D-methionine(in) + ADP + phosphate + H(+). Its function is as follows. Part of the ABC transporter complex MetNIQ involved in methionine import. Responsible for energy coupling to the transport system. The sequence is that of Methionine import ATP-binding protein MetN from Bordetella bronchiseptica (strain ATCC BAA-588 / NCTC 13252 / RB50) (Alcaligenes bronchisepticus).